Consider the following 239-residue polypeptide: tRNA (guanine-N(7)-)-methyltransferase (239 aa).

S-adenosyl-L-methionine contacts are provided by Glu-69, Glu-94, Asp-121, and Asp-144. Asp-144 is a catalytic residue. Lys-148 contacts substrate. The segment at 150–155 (RHNKRR) is interaction with RNA. Substrate contacts are provided by residues Asp-180 and 217–220 (TKFE).

It belongs to the class I-like SAM-binding methyltransferase superfamily. TrmB family. In terms of assembly, monomer.

It carries out the reaction guanosine(46) in tRNA + S-adenosyl-L-methionine = N(7)-methylguanosine(46) in tRNA + S-adenosyl-L-homocysteine. It functions in the pathway tRNA modification; N(7)-methylguanine-tRNA biosynthesis. Catalyzes the formation of N(7)-methylguanine at position 46 (m7G46) in tRNA. This chain is tRNA (guanine-N(7)-)-methyltransferase, found in Photorhabdus laumondii subsp. laumondii (strain DSM 15139 / CIP 105565 / TT01) (Photorhabdus luminescens subsp. laumondii).